The following is a 774-amino-acid chain: Cilium assembly protein DZIP1L (774 aa).

The C2H2-type zinc finger occupies His-166–His-189. Residues Leu-204 to Asn-450 are a coiled coil. Disordered regions lie at residues Met-415–Glu-435, Asn-515–Gly-674, and Lys-686–Trp-774. Residues Thr-421–Ser-433 are compositionally biased toward acidic residues. Ser-425 and Ser-426 each carry phosphoserine. Basic and acidic residues predominate over residues Asn-515–Trp-526. Over residues Gly-597–Ser-616 the composition is skewed to low complexity.

The protein belongs to the DZIP C2H2-type zinc-finger protein family. Interacts with SEPTIN2.

The protein resides in the cytoplasm. It is found in the cytoskeleton. It localises to the cilium basal body. The protein localises to the microtubule organizing center. Its subcellular location is the centrosome. The protein resides in the centriole. In terms of biological role, involved in primary cilium formation. Probably acts as a transition zone protein required for localization of PKD1/PC1 and PKD2/PC2 to the ciliary membrane. In Mus musculus (Mouse), this protein is Cilium assembly protein DZIP1L.